We begin with the raw amino-acid sequence, 147 residues long: Hemoglobin subunit gamma-2 (147 aa).

The Globin domain occupies 3 to 147 (HFTEEDKATI…VASALSSRYH (145 aa)). Threonine 13 is modified (phosphothreonine). A phosphoserine mark is found at serine 45, serine 51, and serine 53. Lysine 60 is subject to N6-acetyllysine. Histidine 64 contributes to the heme b binding site. Lysine 83 carries the post-translational modification N6-acetyllysine. Residue histidine 93 participates in heme b binding. Residue cysteine 94 is modified to S-nitrosocysteine. Phosphoserine occurs at positions 140, 143, and 144.

The protein belongs to the globin family. As to quaternary structure, heterotetramer of two alpha chains and two gamma chains in fetal hemoglobin (Hb F). Red blood cells.

Gamma chains make up the fetal hemoglobin F, in combination with alpha chains. The chain is Hemoglobin subunit gamma-2 (HBG2) from Hylobates lar (Lar gibbon).